A 208-amino-acid chain; its full sequence is Apoptosis inhibitor 193R (208 aa).

Positions Met1–Gly25 are disordered. Positions Asp10–Asp23 are enriched in acidic residues. A BIR repeat occupies Tyr37–Val108. Positions 74, 77, 94, and 105 each coordinate Zn(2+). Tandem repeats lie at residues Asn134–His139, Asn140–His145, and Asn146–Gln151. The 3 X 6 AA tandem repeats stretch occupies residues Asn134–Gln151. The RING-type zinc-finger motif lies at Cys163–Lys197.

Belongs to the IIV-6 193R family.

In terms of biological role, plays a role early in infection by preventing host cell apoptosis. The protein is Apoptosis inhibitor 193R of Invertebrate iridescent virus 6 (IIV-6).